A 131-amino-acid polypeptide reads, in one-letter code: Large ribosomal subunit protein bL17 (131 aa).

Belongs to the bacterial ribosomal protein bL17 family. As to quaternary structure, part of the 50S ribosomal subunit. Contacts protein L32.

In Thermotoga maritima (strain ATCC 43589 / DSM 3109 / JCM 10099 / NBRC 100826 / MSB8), this protein is Large ribosomal subunit protein bL17.